We begin with the raw amino-acid sequence, 526 residues long: Peptide chain release factor 3 (526 aa).

One can recognise a tr-type G domain in the interval 8 to 277 (NKRRTFAIIS…GLTEWAPKPQ (270 aa)). Residues 17-24 (SHPDAGKT), 85-89 (DTPGH), and 139-142 (NKLD) contribute to the GTP site.

It belongs to the TRAFAC class translation factor GTPase superfamily. Classic translation factor GTPase family. PrfC subfamily.

The protein resides in the cytoplasm. Functionally, increases the formation of ribosomal termination complexes and stimulates activities of RF-1 and RF-2. It binds guanine nucleotides and has strong preference for UGA stop codons. It may interact directly with the ribosome. The stimulation of RF-1 and RF-2 is significantly reduced by GTP and GDP, but not by GMP. This is Peptide chain release factor 3 from Haemophilus ducreyi (strain 35000HP / ATCC 700724).